A 257-amino-acid chain; its full sequence is Hydroxyacylglutathione hydrolase (257 aa).

Residues His-55, His-57, Asp-59, His-60, His-112, Asp-129, and His-167 each contribute to the Zn(2+) site.

The protein belongs to the metallo-beta-lactamase superfamily. Glyoxalase II family. As to quaternary structure, monomer. Zn(2+) serves as cofactor.

It catalyses the reaction an S-(2-hydroxyacyl)glutathione + H2O = a 2-hydroxy carboxylate + glutathione + H(+). The protein operates within secondary metabolite metabolism; methylglyoxal degradation; (R)-lactate from methylglyoxal: step 2/2. Its function is as follows. Thiolesterase that catalyzes the hydrolysis of S-D-lactoyl-glutathione to form glutathione and D-lactic acid. The protein is Hydroxyacylglutathione hydrolase of Pseudoalteromonas translucida (strain TAC 125).